Here is a 285-residue protein sequence, read N- to C-terminus: Stress response regulator protein 1 (285 aa).

2 stretches are compositionally biased toward low complexity: residues 43–58 (DTSS…SSNN) and 128–138 (SIISSKSSNKS). Disordered stretches follow at residues 43-66 (DTSS…SDQQ) and 114-142 (PLTP…TTVV). The Response regulatory domain maps to 158–276 (SFLIVDDNII…LDFMANSIDD (119 aa)). Position 209 is a 4-aspartylphosphate (D209).

Functionally, required for stress adaptation, morphogenesis and virulence. In Candida dubliniensis (strain CD36 / ATCC MYA-646 / CBS 7987 / NCPF 3949 / NRRL Y-17841) (Yeast), this protein is Stress response regulator protein 1 (SRR1).